The chain runs to 220 residues: MSEEEVSFSRDYFVEMDVRDEEAHELASDWFDEVVFTKKLVLEDPPDWGSLKEELKELRGKYGKVALLLVTRKPSLIREVKSRNLKALLYVQGGDMRINRMAIESGVDALISPWFGRKDPGFDHTLAGMAARRGVAIGFSLSPLLNANPYGRAQILRFMMKTWQLVKKYRVPRFITSSAESRWEVRGPRDLMSLGINIGMEIPEARASLNFYPRTIVWKL.

This sequence belongs to the eukaryotic/archaeal RNase P protein component 3 family. In terms of assembly, consists of a catalytic RNA component and at least 4-5 protein subunits.

It localises to the cytoplasm. It catalyses the reaction Endonucleolytic cleavage of RNA, removing 5'-extranucleotides from tRNA precursor.. In terms of biological role, part of ribonuclease P, a protein complex that generates mature tRNA molecules by cleaving their 5'-ends. This chain is Ribonuclease P protein component 3, found in Thermococcus kodakarensis (strain ATCC BAA-918 / JCM 12380 / KOD1) (Pyrococcus kodakaraensis (strain KOD1)).